The chain runs to 434 residues: DNA primase DnaG (434 aa).

Positions Asp-171–Glu-250 constitute a Toprim domain. The Mg(2+) site is built by Glu-177, Asp-219, and Asp-221. The disordered stretch occupies residues Gly-290 to Pro-319. A compositionally biased stretch (basic and acidic residues) spans Glu-292 to Gly-303.

This sequence belongs to the archaeal DnaG primase family. Forms a ternary complex with MCM helicase and DNA. The cofactor is Mg(2+).

The enzyme catalyses ssDNA + n NTP = ssDNA/pppN(pN)n-1 hybrid + (n-1) diphosphate.. In terms of biological role, RNA polymerase that catalyzes the synthesis of short RNA molecules used as primers for DNA polymerase during DNA replication. The sequence is that of DNA primase DnaG from Methanocorpusculum labreanum (strain ATCC 43576 / DSM 4855 / Z).